Reading from the N-terminus, the 267-residue chain is Trehalose 2-sulfotransferase (267 aa).

Alpha,alpha-trehalose contacts are provided by residues Gln14, 33–39 (EPQEFFQ), Pro48, and Trp53. Residue Glu36 is the Proton acceptor of the active site.

The protein belongs to the Stf0 sulfotransferase family. Homodimer.

The enzyme catalyses alpha,alpha-trehalose + 3'-phosphoadenylyl sulfate = 2-O-sulfo-alpha,alpha-trehalose + adenosine 3',5'-bisphosphate + H(+). Its pathway is glycolipid metabolism. Functionally, catalyzes the sulfuryl group transfer from 3'-phosphoadenosine-5'-phosphosulfate (PAPS) to trehalose, leading to trehalose-2-sulfate (T2S). The sulfation of trehalose is the first step in the biosynthesis of sulfolipid-1 (SL-1), a major cell wall glycolipid in pathogenic mycobacteria. Cannot use free glucose and unnatural stereoisomers of trehalose (alpha,beta (neo-trehalose) and beta,beta (iso-trehalose)) as substrates. The protein is Trehalose 2-sulfotransferase of Mycolicibacterium smegmatis (strain ATCC 700084 / mc(2)155) (Mycobacterium smegmatis).